A 384-amino-acid polypeptide reads, in one-letter code: A-type ATP synthase subunit C (384 aa).

This sequence belongs to the V-ATPase V0D/AC39 subunit family. In terms of assembly, has multiple subunits with at least A(3), B(3), C, D, E, F, H, I and proteolipid K(x).

The protein resides in the cell membrane. Its function is as follows. Component of the A-type ATP synthase that produces ATP from ADP in the presence of a proton gradient across the membrane. This Methanobrevibacter smithii (strain ATCC 35061 / DSM 861 / OCM 144 / PS) protein is A-type ATP synthase subunit C.